Consider the following 381-residue polypeptide: Tumor necrosis factor receptor superfamily member 10B (381 aa).

Residues 1-52 form the signal peptide; sequence MEPPGPSTPTASAAARADHYTPGLRPLPKRRLLYSFALLLAVLQAVFVPVTA. TNFR-Cys repeat units follow at residues 26–86, 87–129, and 130–169; these read PLPK…GNCK, PCRE…NTVC, and RCKP…NRKC. Residues 53-180 lie on the Extracellular side of the membrane; that stretch reads NPAHNRPAGL…SKTAWASWHK (128 aa). Intrachain disulfides connect Cys74–Cys85, Cys88–Cys105, Cys108–Cys121, Cys111–Cys129, Cys131–Cys145, Cys148–Cys161, and Cys151–Cys169. A helical membrane pass occupies residues 181 to 201; sequence LGLWIGLLVPVVLLIGALLVW. At 202 to 381 the chain is on the cytoplasmic side; sequence KTGAWRQWLL…ETGPGGSQCV (180 aa). The interval 228–260 is disordered; sequence HSSLLDRQTSSTTNDSNHNTEPGKTQKTGKKLL. Positions 236-247 are enriched in low complexity; it reads TSSTTNDSNHNT. The Death domain maps to 273–356; sequence KFIFEYCSDI…DAMEKIEDYA (84 aa). Arg293 carries a (Microbial infection) N-beta-linked (GlcNAc) arginine glycan.

As to quaternary structure, monomer. Can interact with TRADD and RIPK1. Three TNFRSF10B molecules interact with the TNFSF10 homotrimer. In the absence of stimulation, interacts with BIRC2, DDX3X and GSK3B. The interaction with BIRC2 and DDX3X is further enhanced upon receptor stimulation and accompanied by DDX3X and BIRC2 cleavage. Post-translationally, (Microbial infection) Glycosylated at Arg-293 by S.typhimurium protein Ssek3. Highly expressed in heart, lung and kidney.

It localises to the membrane. Its function is as follows. Receptor for the cytotoxic ligand TNFSF10/TRAIL. The adapter molecule FADD recruits caspase-8 to the activated receptor. The resulting death-inducing signaling complex (DISC) performs caspase-8 proteolytic activation which initiates the subsequent cascade of caspases (aspartate-specific cysteine proteases) mediating apoptosis. Promotes the activation of NF-kappa-B. Essential for ER stress-induced apoptosis. The chain is Tumor necrosis factor receptor superfamily member 10B (Tnfrsf10b) from Mus musculus (Mouse).